The chain runs to 533 residues: Retinoid isomerohydrolase (533 aa).

Position 2 is an N-acetylserine (serine 2). Residues threonine 101 and threonine 105 each carry the phosphothreonine modification. The S-palmitoyl cysteine; in membrane form moiety is linked to residue cysteine 112. Lysine 113 is subject to N6-acetyllysine. A Phosphoserine modification is found at serine 117. Histidine 180 contacts Fe cation. Cysteine 231 carries the S-palmitoyl cysteine; in membrane form lipid modification. Residues histidine 241 and histidine 313 each contribute to the Fe cation site. Residues cysteine 329 and cysteine 330 are each lipidated (S-palmitoyl cysteine; in membrane form). Histidine 527 serves as a coordination point for Fe cation.

Belongs to the carotenoid oxygenase family. Interacts with MYO7A; this mediates light-dependent intracellular transport of RPE65. Requires Fe(2+) as cofactor. In terms of processing, palmitoylation by LRAT regulates ligand binding specificity; the palmitoylated form (membrane form) specifically binds all-trans-retinyl-palmitate, while the soluble unpalmitoylated form binds all-trans-retinol (vitamin A). Retinal pigment epithelium specific.

The protein resides in the cytoplasm. Its subcellular location is the cell membrane. The protein localises to the microsome membrane. It catalyses the reaction an all-trans-retinyl ester + H2O = 11-cis-retinol + a fatty acid + H(+). It carries out the reaction lutein = (3R,3'S)-zeaxanthin. The catalysed reaction is all-trans-retinyl hexadecanoate + H2O = 11-cis-retinol + hexadecanoate + H(+). Its function is as follows. Critical isomerohydrolase in the retinoid cycle involved in regeneration of 11-cis-retinal, the chromophore of rod and cone opsins. Catalyzes the cleavage and isomerization of all-trans-retinyl fatty acid esters to 11-cis-retinol which is further oxidized by 11-cis retinol dehydrogenase to 11-cis-retinal for use as visual chromophore. Essential for the production of 11-cis retinal for both rod and cone photoreceptors. Also capable of catalyzing the isomerization of lutein to meso-zeaxanthin an eye-specific carotenoid. The soluble form binds vitamin A (all-trans-retinol), making it available for LRAT processing to all-trans-retinyl ester. The membrane form, palmitoylated by LRAT, binds all-trans-retinyl esters, making them available for IMH (isomerohydrolase) processing to all-cis-retinol. The soluble form is regenerated by transferring its palmitoyl groups onto 11-cis-retinol, a reaction catalyzed by LRAT. This is Retinoid isomerohydrolase (RPE65) from Bos taurus (Bovine).